The primary structure comprises 102 residues: Small ribosomal subunit protein bS6 (102 aa).

The protein belongs to the bacterial ribosomal protein bS6 family.

Functionally, binds together with bS18 to 16S ribosomal RNA. The protein is Small ribosomal subunit protein bS6 of Desulfovibrio desulfuricans (strain ATCC 27774 / DSM 6949 / MB).